The primary structure comprises 456 residues: Glycine receptor subunit alpha-4 (456 aa).

An N-terminal signal peptide occupies residues 1–27 (MTTLVPASLFLLLWTLPGKVLLSVALA). At 28-256 (KEDVKSGLKG…KFHLERQMGY (229 aa)) the chain is on the extracellular side. Asn-71 is a glycosylation site (N-linked (GlcNAc...) asparagine). Intrachain disulfides connect Cys-171/Cys-185 and Cys-232/Cys-243. Strychnine is bound at residue 236–241 (YNTGKF). The chain crosses the membrane as a helical span at residues 257-278 (YLIQMYIPSLLIVILSWVSFWI). The Cytoplasmic segment spans residues 279-283 (NMDAA). Residues 284–304 (PARVGLGITTVLTMTTQSSGS) traverse the membrane as a helical segment. At 305–315 (RASLPKVSYVK) the chain is on the extracellular side. Residues 316-336 (AIDIWMAVCLLFVFAALLEYA) form a helical membrane-spanning segment. Over 337–423 (AVNFVSRQHK…YVDRAKRIDT (87 aa)) the chain is Cytoplasmic. A helical transmembrane segment spans residues 424 to 444 (ISRAVFPFTFLVFNIFYWVVY). At 445 to 456 (KVLRSEDIHQAL) the chain is on the extracellular side.

This sequence belongs to the ligand-gated ion channel (TC 1.A.9) family. Glycine receptor (TC 1.A.9.3) subfamily. GLRA4 sub-subfamily. In terms of assembly, homopentamer (in vitro). Heteropentamer composed of GLRA4 and GLRB. As to expression, detected in the retina inner plexiform layer, especially at the border between layer three and four (at protein level).

It is found in the postsynaptic cell membrane. It localises to the synapse. Its subcellular location is the perikaryon. The protein resides in the cell projection. The protein localises to the dendrite. It is found in the cell membrane. It carries out the reaction chloride(in) = chloride(out). Its activity is regulated as follows. Inhibited by strychnine. Its function is as follows. Glycine receptors are ligand-gated chloride channels. Channel opening is triggered by extracellular glycine. Channel opening is also triggered by taurine and beta-alanine. Plays a role in the down-regulation of neuronal excitability. Contributes to the generation of inhibitory postsynaptic currents. The chain is Glycine receptor subunit alpha-4 (Glra4) from Mus musculus (Mouse).